The sequence spans 248 residues: Ubiquinone/menaquinone biosynthesis C-methyltransferase UbiE (248 aa).

Serine 68 and aspartate 92 together coordinate S-adenosyl-L-methionine.

This sequence belongs to the class I-like SAM-binding methyltransferase superfamily. MenG/UbiE family.

The enzyme catalyses a 2-demethylmenaquinol + S-adenosyl-L-methionine = a menaquinol + S-adenosyl-L-homocysteine + H(+). It catalyses the reaction a 2-methoxy-6-(all-trans-polyprenyl)benzene-1,4-diol + S-adenosyl-L-methionine = a 5-methoxy-2-methyl-3-(all-trans-polyprenyl)benzene-1,4-diol + S-adenosyl-L-homocysteine + H(+). It functions in the pathway quinol/quinone metabolism; menaquinone biosynthesis; menaquinol from 1,4-dihydroxy-2-naphthoate: step 2/2. It participates in cofactor biosynthesis; ubiquinone biosynthesis. Functionally, methyltransferase required for the conversion of demethylmenaquinol (DMKH2) to menaquinol (MKH2) and the conversion of 2-polyprenyl-6-methoxy-1,4-benzoquinol (DDMQH2) to 2-polyprenyl-3-methyl-6-methoxy-1,4-benzoquinol (DMQH2). The protein is Ubiquinone/menaquinone biosynthesis C-methyltransferase UbiE of Rickettsia akari (strain Hartford).